A 388-amino-acid chain; its full sequence is GTPase Obg (388 aa).

In terms of domain architecture, Obg spans 1 to 159; it reads MKFVDEAVIR…RSLKLELLLL (159 aa). The OBG-type G domain occupies 160-333; that stretch reads ADVGLLGMPN…LALKLLDYIA (174 aa). GTP is bound by residues 166 to 173, 191 to 195, 213 to 216, 283 to 286, and 314 to 316; these read GMPNAGKS, FTTLV, DIPG, NKTD, and SAY. S173 and T193 together coordinate Mg(2+).

It belongs to the TRAFAC class OBG-HflX-like GTPase superfamily. OBG GTPase family. Monomer. Mg(2+) serves as cofactor.

The protein resides in the cytoplasm. In terms of biological role, an essential GTPase which binds GTP, GDP and possibly (p)ppGpp with moderate affinity, with high nucleotide exchange rates and a fairly low GTP hydrolysis rate. Plays a role in control of the cell cycle, stress response, ribosome biogenesis and in those bacteria that undergo differentiation, in morphogenesis control. The polypeptide is GTPase Obg (Shewanella putrefaciens (strain CN-32 / ATCC BAA-453)).